Reading from the N-terminus, the 427-residue chain is 3-phosphoshikimate 1-carboxyvinyltransferase (427 aa).

Positions 22, 23, and 27 each coordinate 3-phosphoshikimate. Residue Lys22 coordinates phosphoenolpyruvate. The phosphoenolpyruvate site is built by Gly96 and Arg124. 3-phosphoshikimate-binding residues include Ser169, Ser170, Gln171, Ser197, Asp313, Asn336, and Lys340. Gln171 contacts phosphoenolpyruvate. Asp313 functions as the Proton acceptor in the catalytic mechanism. Residues Arg344, Arg386, and Lys411 each coordinate phosphoenolpyruvate.

Belongs to the EPSP synthase family. In terms of assembly, monomer.

The protein resides in the cytoplasm. The enzyme catalyses 3-phosphoshikimate + phosphoenolpyruvate = 5-O-(1-carboxyvinyl)-3-phosphoshikimate + phosphate. It participates in metabolic intermediate biosynthesis; chorismate biosynthesis; chorismate from D-erythrose 4-phosphate and phosphoenolpyruvate: step 6/7. Catalyzes the transfer of the enolpyruvyl moiety of phosphoenolpyruvate (PEP) to the 5-hydroxyl of shikimate-3-phosphate (S3P) to produce enolpyruvyl shikimate-3-phosphate and inorganic phosphate. This chain is 3-phosphoshikimate 1-carboxyvinyltransferase, found in Escherichia coli O8 (strain IAI1).